The primary structure comprises 135 residues: Putative nickel-responsive regulator (135 aa).

Residues H79, H90, H92, and C98 each coordinate Ni(2+).

Belongs to the transcriptional regulatory CopG/NikR family. Ni(2+) serves as cofactor.

Transcriptional regulator. The polypeptide is Putative nickel-responsive regulator (Dictyoglomus turgidum (strain DSM 6724 / Z-1310)).